Here is a 333-residue protein sequence, read N- to C-terminus: Ketol-acid reductoisomerase (NADP(+)) (333 aa).

The KARI N-terminal Rossmann domain occupies 1-179; the sequence is MFYDDDADLT…GGTRAGVIKT (179 aa). Residues 22–25, lysine 45, serine 48, serine 50, and 80–83 contribute to the NADP(+) site; these read YGSQ and DTAQ. Histidine 105 is a catalytic residue. An NADP(+)-binding site is contributed by glycine 131. One can recognise a KARI C-terminal knotted domain in the interval 180–325; sequence TFKDETETDL…KRLRDLMSWV (146 aa). Aspartate 188, glutamate 192, glutamate 224, and glutamate 228 together coordinate Mg(2+). Substrate is bound at residue serine 249.

This sequence belongs to the ketol-acid reductoisomerase family. The cofactor is Mg(2+).

The enzyme catalyses (2R)-2,3-dihydroxy-3-methylbutanoate + NADP(+) = (2S)-2-acetolactate + NADPH + H(+). It catalyses the reaction (2R,3R)-2,3-dihydroxy-3-methylpentanoate + NADP(+) = (S)-2-ethyl-2-hydroxy-3-oxobutanoate + NADPH + H(+). It participates in amino-acid biosynthesis; L-isoleucine biosynthesis; L-isoleucine from 2-oxobutanoate: step 2/4. Its pathway is amino-acid biosynthesis; L-valine biosynthesis; L-valine from pyruvate: step 2/4. Functionally, involved in the biosynthesis of branched-chain amino acids (BCAA). Catalyzes an alkyl-migration followed by a ketol-acid reduction of (S)-2-acetolactate (S2AL) to yield (R)-2,3-dihydroxy-isovalerate. In the isomerase reaction, S2AL is rearranged via a Mg-dependent methyl migration to produce 3-hydroxy-3-methyl-2-ketobutyrate (HMKB). In the reductase reaction, this 2-ketoacid undergoes a metal-dependent reduction by NADPH to yield (R)-2,3-dihydroxy-isovalerate. The sequence is that of Ketol-acid reductoisomerase (NADP(+)) from Mycobacterium avium.